A 208-amino-acid chain; its full sequence is Holliday junction resolvase RecU (208 aa).

Residues 1–28 (MNYPNGKPYSKNKPLDGRKSSPFSSNIE) are disordered. Mg(2+) contacts are provided by Thr87, Asp89, Glu102, and Gln121.

The protein belongs to the RecU family. Requires Mg(2+) as cofactor.

It localises to the cytoplasm. The enzyme catalyses Endonucleolytic cleavage at a junction such as a reciprocal single-stranded crossover between two homologous DNA duplexes (Holliday junction).. Endonuclease that resolves Holliday junction intermediates in genetic recombination. Cleaves mobile four-strand junctions by introducing symmetrical nicks in paired strands. Promotes annealing of linear ssDNA with homologous dsDNA. Required for DNA repair, homologous recombination and chromosome segregation. This is Holliday junction resolvase RecU from Staphylococcus epidermidis (strain ATCC 12228 / FDA PCI 1200).